Here is a 480-residue protein sequence, read N- to C-terminus: Cytochrome b-c1 complex subunit 1, mitochondrial (480 aa).

A mitochondrion-targeting transit peptide spans 1 to 34 (MAASAVCRAACSGTQVLLRTRRSPALLRLPALRG). N6-acetyllysine occurs at positions 111 and 138. At Lys163 the chain carries N6-acetyllysine; alternate. Residue Lys163 is modified to N6-succinyllysine; alternate. Phosphoserine is present on Ser212. At Thr214 the chain carries Phosphothreonine. At Lys248 the chain carries N6-acetyllysine.

The protein belongs to the peptidase M16 family. UQCRC1/QCR1 subfamily. In terms of assembly, component of the ubiquinol-cytochrome c oxidoreductase (cytochrome b-c1 complex, complex III, CIII), a multisubunit enzyme composed of 11 subunits. The complex is composed of 3 respiratory subunits cytochrome b, cytochrome c1 and Rieske protein UQCRFS1, 2 core protein subunits UQCRC1/QCR1 and UQCRC2/QCR2, and 6 low-molecular weight protein subunits UQCRH/QCR6, UQCRB/QCR7, UQCRQ/QCR8, UQCR10/QCR9, UQCR11/QCR10 and subunit 9, the cleavage product of Rieske protein UQCRFS1. The complex exists as an obligatory dimer and forms supercomplexes (SCs) in the inner mitochondrial membrane with NADH-ubiquinone oxidoreductase (complex I, CI) and cytochrome c oxidase (complex IV, CIV), resulting in different assemblies (supercomplex SCI(1)III(2)IV(1) and megacomplex MCI(2)III(2)IV(2)). Interacts with UQCC6. Interacts with STMP1. In terms of processing, acetylation of Lys-138 is observed in liver mitochondria from fasted mice but not from fed mice. As to expression, expressed in neurons and astrocytes of the cerebral cortex and hippocampus (at protein level).

The protein localises to the mitochondrion inner membrane. Functionally, component of the ubiquinol-cytochrome c oxidoreductase, a multisubunit transmembrane complex that is part of the mitochondrial electron transport chain which drives oxidative phosphorylation. The respiratory chain contains 3 multisubunit complexes succinate dehydrogenase (complex II, CII), ubiquinol-cytochrome c oxidoreductase (cytochrome b-c1 complex, complex III, CIII) and cytochrome c oxidase (complex IV, CIV), that cooperate to transfer electrons derived from NADH and succinate to molecular oxygen, creating an electrochemical gradient over the inner membrane that drives transmembrane transport and the ATP synthase. The cytochrome b-c1 complex catalyzes electron transfer from ubiquinol to cytochrome c, linking this redox reaction to translocation of protons across the mitochondrial inner membrane, with protons being carried across the membrane as hydrogens on the quinol. In the process called Q cycle, 2 protons are consumed from the matrix, 4 protons are released into the intermembrane space and 2 electrons are passed to cytochrome c. The 2 core subunits UQCRC1/QCR1 and UQCRC2/QCR2 are homologous to the 2 mitochondrial-processing peptidase (MPP) subunits beta-MPP and alpha-MPP respectively, and they seem to have preserved their MPP processing properties. May be involved in the in situ processing of UQCRFS1 into the mature Rieske protein and its mitochondrial targeting sequence (MTS)/subunit 9 when incorporated into complex III. Seems to play an important role in the maintenance of proper mitochondrial function in nigral dopaminergic neurons. This Mus musculus (Mouse) protein is Cytochrome b-c1 complex subunit 1, mitochondrial (Uqcrc1).